A 150-amino-acid polypeptide reads, in one-letter code: Allograft inflammatory factor 1-like (150 aa).

An N-acetylserine modification is found at serine 2. Serine 2 carries the post-translational modification Phosphoserine. The region spanning 47–82 is the EF-hand 1 domain; sequence EKLTAFKEKYMEFDLNNEGEIDLMSLKRMMEKLGVP. 4 residues coordinate Ca(2+): aspartate 60, asparagine 62, glutamate 64, and glutamate 66. In terms of domain architecture, EF-hand 2; degenerate spans 83 to 117; it reads KTHLEMKKMISEVTGGVSDTISYRDFVNMMLGKRS. The segment at 129 to 150 is disordered; it reads KANESSPKPVGPPPERDIASLP. Serine 134 carries the post-translational modification Phosphoserine.

Homodimer (Potential). Monomer.

Its subcellular location is the cytoplasm. The protein localises to the cytoskeleton. It is found in the cell projection. It localises to the ruffle membrane. Actin-binding protein that promotes actin bundling. May neither bind calcium nor depend on calcium for function. This Homo sapiens (Human) protein is Allograft inflammatory factor 1-like (AIF1L).